The following is a 106-amino-acid chain: Protein RnfH (106 aa).

Belongs to the UPF0125 (RnfH) family.

The polypeptide is Protein RnfH (Ectopseudomonas mendocina (strain ymp) (Pseudomonas mendocina)).